A 221-amino-acid polypeptide reads, in one-letter code: Ribonuclease T (221 aa).

The Exonuclease domain occupies valine 21–phenylalanine 195. Mg(2+) contacts are provided by aspartate 24, glutamate 26, histidine 182, and aspartate 187. The active-site Proton donor/acceptor is histidine 182.

This sequence belongs to the RNase T family. In terms of assembly, homodimer. Requires Mg(2+) as cofactor.

Its function is as follows. Trims short 3' overhangs of a variety of RNA species, leaving a one or two nucleotide 3' overhang. Responsible for the end-turnover of tRNA: specifically removes the terminal AMP residue from uncharged tRNA (tRNA-C-C-A). Also appears to be involved in tRNA biosynthesis. This chain is Ribonuclease T, found in Buchnera aphidicola subsp. Cinara cedri (strain Cc).